The sequence spans 397 residues: Polygalacturonase (397 aa).

Positions 1–22 (MGSYLGIYTILVLCLLGYSANA) are cleaved as a signal peptide. PbH1 repeat units follow at residues 169–195 (GKNM…HLGR), 196–217 (CEGV…SVGD), 219–239 (MKNL…SVGS), and 249–270 (VTDI…RIKT). An N-linked (GlcNAc...) asparagine glycan is attached at asparagine 171. Aspartate 210 serves as the catalytic Proton donor. A disulfide bridge connects residues cysteine 212 and cysteine 229. Histidine 233 is an active-site residue. The N-linked (GlcNAc...) asparagine glycan is linked to asparagine 256. 2 cysteine pairs are disulfide-bonded: cysteine 341-cysteine 347 and cysteine 370-cysteine 386.

It belongs to the glycosyl hydrolase 28 family. Pollen.

The protein resides in the secreted. It localises to the cell wall. It carries out the reaction (1,4-alpha-D-galacturonosyl)n+m + H2O = (1,4-alpha-D-galacturonosyl)n + (1,4-alpha-D-galacturonosyl)m.. May function in depolymerizing pectin during pollen development, germination, and tube growth. This Brassica napus (Rape) protein is Polygalacturonase.